A 123-amino-acid polypeptide reads, in one-letter code: Large ribosomal subunit protein uL14 (123 aa).

This sequence belongs to the universal ribosomal protein uL14 family. In terms of assembly, part of the 50S ribosomal subunit. Forms a cluster with proteins L3 and L19. In the 70S ribosome, L14 and L19 interact and together make contacts with the 16S rRNA in bridges B5 and B8.

Functionally, binds to 23S rRNA. Forms part of two intersubunit bridges in the 70S ribosome. The sequence is that of Large ribosomal subunit protein uL14 from Enterobacter sp. (strain 638).